The sequence spans 289 residues: Oxaloacetate decarboxylase (289 aa).

Substrate is bound at residue serine 50. A Mg(2+)-binding site is contributed by aspartate 88. Arginine 159 and histidine 235 together coordinate substrate.

Belongs to the isocitrate lyase/PEP mutase superfamily. Oxaloacetate decarboxylase family. In terms of assembly, homotetramer; dimer of dimers. Mg(2+) is required as a cofactor.

The enzyme catalyses oxaloacetate + H(+) = pyruvate + CO2. Its function is as follows. Catalyzes the decarboxylation of oxaloacetate into pyruvate. Seems to play a role in maintaining cellular concentrations of bicarbonate and pyruvate. The polypeptide is Oxaloacetate decarboxylase (Pseudomonas putida (strain GB-1)).